A 338-amino-acid chain; its full sequence is Lipoate-protein ligase A (338 aa).

One can recognise a BPL/LPL catalytic domain in the interval 29–216 (PATQRVLFLW…AFFAHYGERV (188 aa)). Residues R71, 76–79 (GAVF), and K134 contribute to the ATP site. (R)-lipoate is bound at residue K134.

It belongs to the LplA family. In terms of assembly, monomer.

It is found in the cytoplasm. The catalysed reaction is L-lysyl-[lipoyl-carrier protein] + (R)-lipoate + ATP = N(6)-[(R)-lipoyl]-L-lysyl-[lipoyl-carrier protein] + AMP + diphosphate + H(+). The protein operates within protein modification; protein lipoylation via exogenous pathway; protein N(6)-(lipoyl)lysine from lipoate: step 1/2. Its pathway is protein modification; protein lipoylation via exogenous pathway; protein N(6)-(lipoyl)lysine from lipoate: step 2/2. Catalyzes both the ATP-dependent activation of exogenously supplied lipoate to lipoyl-AMP and the transfer of the activated lipoyl onto the lipoyl domains of lipoate-dependent enzymes. The polypeptide is Lipoate-protein ligase A (Escherichia coli (strain 55989 / EAEC)).